A 911-amino-acid polypeptide reads, in one-letter code: Brevican core protein (911 aa).

The first 22 residues, 1–22 (MAQLFLPLLAALVLAQAPAALA), serve as a signal peptide directing secretion. The region spanning 36–155 (RVRIAGDAPL…SSDAVEVKVK (120 aa)) is the Ig-like V-type domain. Disulfide bonds link Cys57-Cys137, Cys179-Cys250, Cys203-Cys224, Cys277-Cys352, and Cys301-Cys322. The N-linked (GlcNAc...) asparagine glycan is linked to Asn130. Link domains are found at residues 157-252 (VVFL…YCYA) and 257-354 (GELF…YCFR). Residue Asn337 is glycosylated (N-linked (GlcNAc...) asparagine). The segment at 391–641 (QLPQEATESE…PTDSASRGGV (251 aa)) is disordered. Phosphoserine is present on Ser418. The O-linked (Xyl...) (chondroitin sulfate) serine glycan is linked to Ser418. The segment covering 454–478 (EEEEKYEDEEEKEEEEEEEEVEDEA) has biased composition (acidic residues). O-glycosylated at two sites regions lie at residues 520–530 (SPLPDGESEAS) and 540–545 (TETLPT). The O-glycosylated at one site stretch occupies residues 569–575 (TGGPELS). A compositionally biased stretch (polar residues) spans 612 to 627 (EDNSGRTAPAGTSVQA). The GPI-anchor amidated alanine moiety is linked to residue Ala646. Positions 646-682 (ASGDCVPSPCHNGGTCLEEEEGVRCLCLPGYGGDLCD) constitute an EGF-like domain. 8 disulfides stabilise this stretch: Cys650-Cys661, Cys655-Cys670, Cys672-Cys681, Cys688-Cys699, Cys716-Cys808, Cys784-Cys800, Cys815-Cys858, and Cys844-Cys871. One can recognise a C-type lectin domain in the interval 695–809 (FQGACYKHFS…CNYHLSYTCK (115 aa)). In terms of domain architecture, Sushi spans 813-873 (VSCGPPPELP…WEAPQISCVP (61 aa)). O-linked (GalNAc...) serine glycans are attached at residues Ser905 and Ser906.

This sequence belongs to the aggrecan/versican proteoglycan family. As to quaternary structure, interacts with TNR. In terms of processing, O-glycosylated; contains chondroitin sulfate. O-glycosylated with a core 1 or possibly core 8 glycan. As to expression, expressed in the retina, specifically in the inner nuclear layer, inner plexiform layer and ganglion cell layer (at protein level). Detected in cerebrospinal fluid (at protein level). Detected in urine (at protein level).

The protein localises to the secreted. It is found in the extracellular space. It localises to the extracellular matrix. The protein resides in the membrane. Functionally, may play a role in the terminally differentiating and the adult nervous system during postnatal development. Could stabilize interactions between hyaluronan (HA) and brain proteoglycans. The sequence is that of Brevican core protein (BCAN) from Homo sapiens (Human).